Reading from the N-terminus, the 285-residue chain is (3S)-malyl-CoA thioesterase (285 aa).

The substrate site is built by R70 and E122. Residues E122 and D148 each coordinate Mg(2+).

Belongs to the HpcH/HpaI aldolase family. Homodimer or homotrimer. The cofactor is Mg(2+).

It catalyses the reaction (S)-malyl-CoA + H2O = (S)-malate + CoA + H(+). Reversibly inhibited by EDTA. Stimulated by the divalent cations Mg(2+) and Mn(2+). Functionally, catalyzes the hydrolysis of (3S)-malyl-CoA to (3S)-malate and free CoA. Inactive towards beta-methylmalyl-CoA and other CoA esters. The polypeptide is (3S)-malyl-CoA thioesterase (Cereibacter sphaeroides (strain ATCC 17023 / DSM 158 / JCM 6121 / CCUG 31486 / LMG 2827 / NBRC 12203 / NCIMB 8253 / ATH 2.4.1.) (Rhodobacter sphaeroides)).